The primary structure comprises 209 residues: Ribosomal RNA large subunit methyltransferase E (209 aa).

Positions 63, 65, 83, 99, and 124 each coordinate S-adenosyl-L-methionine. The active-site Proton acceptor is the Lys164.

It belongs to the class I-like SAM-binding methyltransferase superfamily. RNA methyltransferase RlmE family.

Its subcellular location is the cytoplasm. It carries out the reaction uridine(2552) in 23S rRNA + S-adenosyl-L-methionine = 2'-O-methyluridine(2552) in 23S rRNA + S-adenosyl-L-homocysteine + H(+). Functionally, specifically methylates the uridine in position 2552 of 23S rRNA at the 2'-O position of the ribose in the fully assembled 50S ribosomal subunit. The sequence is that of Ribosomal RNA large subunit methyltransferase E from Serratia proteamaculans (strain 568).